The primary structure comprises 41 residues: uncharacterized protein (41 aa).

A helical membrane pass occupies residues 10–32 (LIILAVPFMIKTSLKTNLIFFFL).

The protein localises to the cell inner membrane. This is an uncharacterized protein from Escherichia coli (strain K12).